We begin with the raw amino-acid sequence, 450 residues long: Probable glucoamylase (450 aa).

Residues 1–16 (MRTYWLFLLLGGVVSA) form the signal peptide. A propeptide spanning residues 17-28 (ESLLSPNKRSKE) is cleaved from the precursor. Trp147 is a substrate binding site. Asp203 functions as the Proton acceptor in the catalytic mechanism. Residue Glu206 is the Proton donor of the active site. 2 N-linked (GlcNAc...) asparagine glycosylation sites follow: Asn383 and Asn409.

The protein belongs to the glycosyl hydrolase 15 family.

It carries out the reaction Hydrolysis of terminal (1-&gt;4)-linked alpha-D-glucose residues successively from non-reducing ends of the chains with release of beta-D-glucose.. The sequence is that of Probable glucoamylase (meu17) from Schizosaccharomyces pombe (strain 972 / ATCC 24843) (Fission yeast).